Here is a 268-residue protein sequence, read N- to C-terminus: Tryptophan synthase alpha chain (268 aa).

Active-site proton acceptor residues include E49 and D60.

The protein belongs to the TrpA family. In terms of assembly, tetramer of two alpha and two beta chains.

The catalysed reaction is (1S,2R)-1-C-(indol-3-yl)glycerol 3-phosphate + L-serine = D-glyceraldehyde 3-phosphate + L-tryptophan + H2O. It participates in amino-acid biosynthesis; L-tryptophan biosynthesis; L-tryptophan from chorismate: step 5/5. Functionally, the alpha subunit is responsible for the aldol cleavage of indoleglycerol phosphate to indole and glyceraldehyde 3-phosphate. The sequence is that of Tryptophan synthase alpha chain from Escherichia coli O157:H7.